The sequence spans 776 residues: DExH-box ATP-dependent RNA helicase DExH18, mitochondrial (776 aa).

The transit peptide at 1–84 (MARGVAGVLR…RSFSSTVDNN (84 aa)) directs the protein to the mitochondrion. A disordered region spans residues 80–101 (TVDNNGENDDIEESVGSESDDY). Residues 85–101 (GENDDIEESVGSESDDY) are compositionally biased toward acidic residues. One can recognise a Helicase ATP-binding domain in the interval 268-426 (FARAMKRKIV…RFKPLVVEAK (159 aa)). An ATP-binding site is contributed by 281 to 288 (GPTNSGKT). The short motif at 361–364 (DEIQ) is the DEIH box; degenerate element. Residues 427–595 (TLLGELKNVK…LFAAQVPDMA (169 aa)) form the Helicase C-terminal domain.

This sequence belongs to the DExH box helicase family. Homodimer; in free form. Component of the mitochondrial degradosome (mtEXO) complex which is a heteropentamer containing 2 copies of SUPV3L1 and 3 copies of PNPT1. Mg(2+) is required as a cofactor. The cofactor is Mn(2+).

The protein resides in the nucleus. The protein localises to the mitochondrion matrix. Its subcellular location is the mitochondrion nucleoid. It catalyses the reaction ATP + H2O = ADP + phosphate + H(+). Functionally, major helicase player in mitochondrial RNA metabolism. Component of the mitochondrial degradosome (mtEXO) complex, that degrades 3' overhang double-stranded RNA with a 3'-to-5' directionality in an ATP-dependent manner. ATPase and ATP-dependent multisubstrate helicase, able to unwind double-stranded (ds) DNA and RNA, and RNA/DNA heteroduplexes in the 5'-to-3' direction. Plays a role in the RNA surveillance system in mitochondria; regulates the stability of mature mRNAs, the removal of aberrantly formed mRNAs and the rapid degradation of non coding processing intermediates. The protein is DExH-box ATP-dependent RNA helicase DExH18, mitochondrial of Arabidopsis thaliana (Mouse-ear cress).